A 457-amino-acid chain; its full sequence is Tubulin gamma-2 chain (457 aa).

142–148 (AGGTGSG) is a binding site for GTP.

Belongs to the tubulin family. Interacts with Ote. As to expression, expressed in nurse cells and oocytes of developing egg chambers.

The protein localises to the cytoplasm. It is found in the cytoskeleton. Its subcellular location is the microtubule organizing center. The protein resides in the centrosome. It localises to the spindle. In terms of biological role, tubulin is the major constituent of microtubules. The gamma chain is found at microtubule organizing centers (MTOC) such as the spindle poles or the centrosome, suggesting that it is involved in the minus-end nucleation of microtubule assembly. Required for oocyte activation and consequently for organization of the female meiotic spindle. Essential for centrosome organization and assembly of biastral mitotic spindles in embryos. Plays a role in stabilizing the augmin complex on the meiotic spindle. The chain is Tubulin gamma-2 chain (gammaTub37C) from Drosophila melanogaster (Fruit fly).